A 97-amino-acid chain; its full sequence is C-C motif chemokine 8 (97 aa).

Positions 1–23 are cleaved as a signal peptide; sequence MKIYAVLLCLLLIAVPVSPEKLT. 2 cysteine pairs are disulfide-bonded: Cys-32/Cys-57 and Cys-33/Cys-73.

It belongs to the intercrine beta (chemokine CC) family. As to quaternary structure, monomer or homodimer; in equilibrium.

It is found in the secreted. In terms of biological role, chemotactic factor that attracts monocytes. This protein can bind heparin. The chain is C-C motif chemokine 8 (Ccl8) from Mus musculus (Mouse).